Consider the following 495-residue polypeptide: GTPase Der (495 aa).

EngA-type G domains lie at 3–166 (PVVA…VQDE) and 208–381 (IKLA…SCAT). GTP-binding positions include 9 to 16 (GRPNVGKS), 56 to 60 (DTGGI), 118 to 121 (NKTD), 214 to 221 (GRPNVGKS), 261 to 265 (DTAGV), and 326 to 329 (NKWD). The KH-like domain maps to 382 to 466 (RRVSTAMLTR…PIRIQFKEGE (85 aa)).

It belongs to the TRAFAC class TrmE-Era-EngA-EngB-Septin-like GTPase superfamily. EngA (Der) GTPase family. Associates with the 50S ribosomal subunit.

Functionally, GTPase that plays an essential role in the late steps of ribosome biogenesis. This is GTPase Der from Pectobacterium atrosepticum (strain SCRI 1043 / ATCC BAA-672) (Erwinia carotovora subsp. atroseptica).